We begin with the raw amino-acid sequence, 178 residues long: Bifunctional protein PyrR (178 aa).

Residues 99–111 carry the PRPP-binding motif; the sequence is VILVDDVLFTGRT.

The protein belongs to the purine/pyrimidine phosphoribosyltransferase family. PyrR subfamily. As to quaternary structure, homodimer and homohexamer; in equilibrium.

It carries out the reaction UMP + diphosphate = 5-phospho-alpha-D-ribose 1-diphosphate + uracil. Its function is as follows. Regulates transcriptional attenuation of the pyrimidine nucleotide (pyr) operon by binding in a uridine-dependent manner to specific sites on pyr mRNA. This disrupts an antiterminator hairpin in the RNA and favors formation of a downstream transcription terminator, leading to a reduced expression of downstream genes. Also displays a weak uracil phosphoribosyltransferase activity which is not physiologically significant. The sequence is that of Bifunctional protein PyrR from Ligilactobacillus salivarius (strain UCC118) (Lactobacillus salivarius).